The chain runs to 316 residues: Spermidine synthase (316 aa).

The PABS domain maps to 25–262; it reads PGWFSEISPM…GVIGFMLCST (238 aa). Gln-56 is a binding site for S-adenosyl 3-(methylsulfanyl)propylamine. Tyr-86 serves as a coordination point for putrescine. S-adenosyl 3-(methylsulfanyl)propylamine is bound by residues Gln-87, Asp-111, Glu-131, 162-163, and Asp-181; that span reads DG. Residue Asp-181 is the Proton acceptor of the active site. Residues 181–184 and Tyr-250 each bind putrescine; that span reads DSSD.

This sequence belongs to the spermidine/spermine synthase family.

The enzyme catalyses S-adenosyl 3-(methylsulfanyl)propylamine + putrescine = S-methyl-5'-thioadenosine + spermidine + H(+). Its pathway is amine and polyamine biosynthesis; spermidine biosynthesis; spermidine from putrescine: step 1/1. The chain is Spermidine synthase from Coffea arabica (Arabian coffee).